A 138-amino-acid chain; its full sequence is Rapid alkalinization factor 23 (138 aa).

Residues Met-1–Ala-28 form the signal peptide. A propeptide spans Val-29–Leu-88 (removed in mature form). 2 cysteine pairs are disulfide-bonded: Cys-106/Cys-116 and Cys-129/Cys-135.

It belongs to the plant rapid alkalinization factor (RALF) family. Proteolytically cleaved, probably by SBT6.1 (S1P), a subtilisin-like serine protease (subtilase).

The protein localises to the secreted. Functionally, cell signaling peptide that may regulate plant stress, growth, and development. Mediates a rapid alkalinization of extracellular space by mediating a transient increase in the cytoplasmic Ca(2+) concentration leading to a calcium-dependent signaling events through a cell surface receptor and a concomitant activation of some intracellular mitogen-activated protein kinases. Negatively regulates brassinolide (BL)-mediated signaling pathway (e.g. BL-induced hypocotyl elongation and branching limitation). The chain is Rapid alkalinization factor 23 (RALF23) from Arabidopsis thaliana (Mouse-ear cress).